The chain runs to 137 residues: uncharacterized protein (137 aa).

In terms of domain architecture, Ubiquitin-like spans 58-135; it reads VHVVAKTVRP…EVNLQMFLMN (78 aa).

It localises to the cytoplasm. The protein localises to the nucleus. This is an uncharacterized protein from Schizosaccharomyces pombe (strain 972 / ATCC 24843) (Fission yeast).